The sequence spans 1018 residues: Unconventional myosin-Ig (1018 aa).

N-acetylmethionine is present on Met-1. Positions 9–707 (YGKPDFVLLD…TLVTLEQSRA (699 aa)) constitute a Myosin motor domain. ATP is bound at residue 102–109 (GESGAGKT). The segment at 584 to 606 (MVALVENLASKEPFYVRCIKPNE) is actin-binding. One can recognise an IQ domain in the interval 710 to 739 (IPIIVLLLQKAWRGTLARWRCRRLRAIYTI). Residues 824–1017 (GLRQDWGCRR…RGSFTLLWPS (194 aa)) form the TH1 domain.

The protein belongs to the TRAFAC class myosin-kinesin ATPase superfamily. Myosin family. Interacts with calmodulin; via its IQ motifs. As to expression, specifically expressed in hematopoietic cells.

It localises to the cell membrane. The protein localises to the cell projection. Its subcellular location is the phagocytic cup. Its function is as follows. Unconventional myosin required during immune response for detection of rare antigen-presenting cells by regulating T-cell migration. Unconventional myosins are actin-based motor molecules with ATPase activity and serve in intracellular movements. Acts as a regulator of T-cell migration by generating membrane tension, enforcing cell-intrinsic meandering search, thereby enhancing detection of rare antigens during lymph-node surveillance, enabling pathogen eradication. Also required in B-cells, where it regulates different membrane/cytoskeleton-dependent processes. Involved in Fc-gamma receptor (Fc-gamma-R) phagocytosis. In terms of biological role, constitutes the minor histocompatibility antigen HA-2. More generally, minor histocompatibility antigens (mHags) refer to immunogenic peptide which, when complexed with MHC, can generate an immune response after recognition by specific T-cells. The peptides are derived from polymorphic intracellular proteins, which are cleaved by normal pathways of antigen processing. The binding of these peptides to MHC class I or class II molecules and their expression on the cell surface can stimulate T-cell responses and thereby trigger graft rejection or graft-versus-host disease (GVHD) after hematopoietic stem cell transplantation from HLA-identical sibling donor. GVHD is a frequent complication after bone marrow transplantation (BMT), due to mismatch of minor histocompatibility antigen in HLA-matched sibling marrow transplants. HA-2 is restricted to MHC class I HLA-A*0201. This chain is Unconventional myosin-Ig (MYO1G), found in Homo sapiens (Human).